Reading from the N-terminus, the 311-residue chain is Coelenterazine h 2-monooxygenase (311 aa).

The AB hydrolase-1 domain occupies 45-291 (NAVIFLHGNA…KGLHFSQEDA (247 aa)). Residues Asp-162 and His-285 each contribute to the substrate site.

Monomer.

It carries out the reaction coelenterazine h + O2 = excited coelenteramide h monoanion + hnu + CO2 + H(+). Functionally, upon binding the substrate, the enzyme catalyzes an oxygenation, producing a very short-lived hydroperoxide that cyclizes into a dioxetanone structure, which collapses, releasing a CO(2) molecule. The spontaneous breakdown of the dioxetanone releases the energy (about 50 kcal/mole) that is necessary to generate the excited state of the coelenteramide product, which is the singlet form of the monoanion. In vivo the product undergoes the process of nonradiative energy transfer to an accessory protein, a green fluorescent protein (GFP), which results in green bioluminescence. In vitro, in the absence of GFP, the product emits blue light. The protein is Coelenterazine h 2-monooxygenase of Renilla reniformis (Sea pansy).